The primary structure comprises 170 residues: Large ribosomal subunit protein uL18m (170 aa).

The protein belongs to the universal ribosomal protein uL18 family. In terms of assembly, component of the mitochondrial ribosome large subunit (39S) which comprises a 16S rRNA and about 50 distinct proteins.

It is found in the mitochondrion. This is Large ribosomal subunit protein uL18m (mrpl-18) from Caenorhabditis elegans.